Reading from the N-terminus, the 128-residue chain is UPF0325 protein YaeH (128 aa).

This sequence belongs to the UPF0325 family.

The polypeptide is UPF0325 protein YaeH (Escherichia fergusonii (strain ATCC 35469 / DSM 13698 / CCUG 18766 / IAM 14443 / JCM 21226 / LMG 7866 / NBRC 102419 / NCTC 12128 / CDC 0568-73)).